The primary structure comprises 419 residues: Metacaspase-1B (419 aa).

The interval 1–109 (MYHPNYNYPP…PPMEAQQFGK (109 aa)) is disordered. Residues 33–50 (SPPPPQPYYSNGYPPPSQ) are compositionally biased toward pro residues. A compositionally biased stretch (low complexity) spans 51–66 (SPHSYSPPQYPPHGQY). The segment covering 82 to 93 (QYRSYHSHSPSW) has biased composition (polar residues). Catalysis depends on residues H210 and C266.

The protein belongs to the peptidase C14B family.

Involved in cell death (apoptosis). The protein is Metacaspase-1B (casB) of Aspergillus oryzae (strain ATCC 42149 / RIB 40) (Yellow koji mold).